Reading from the N-terminus, the 159-residue chain is uncharacterized protein (159 aa).

This is an uncharacterized protein from Methanocaldococcus jannaschii (strain ATCC 43067 / DSM 2661 / JAL-1 / JCM 10045 / NBRC 100440) (Methanococcus jannaschii).